We begin with the raw amino-acid sequence, 510 residues long: Pentatricopeptide repeat-containing protein At1g71060, mitochondrial (510 aa).

Residues 1 to 14 (MVFSRFFRVTGVNL) constitute a mitochondrion transit peptide. PPR repeat units lie at residues 127–157 (TTSNYNALIESLGKIKQFKLIWSLVDDMKAK), 161–195 (SKETFALISRRYARARKVKEAIGAFHKMEEFGFKM), 196–230 (ESSDFNRMLDTLSKSRNVGDAQKVFDKMKKKRFEP), 231–265 (DIKSYTILLEGWGQELNLLRVDEVNREMKDEGFEP), 266–300 (DVVAYGIIINAHCKAKKYEEAIRFFNEMEQRNCKP), 301–335 (SPHIFCSLINGLGSEKKLNDALEFFERSKSSGFPL), 336–370 (EAPTYNALVGAYCWSQRMEDAYKTVDEMRLKGVGP), 371–401 (NARTYDIILHHLIRMQRSKEAYEVYQTMSCE), 403–437 (TVSTYEIMVRMFCNKERLDMAIKIWDEMKGKGVLP), and 438–472 (GMHMFSSLITALCHENKLDEACEYFNEMLDVGIRP).

Belongs to the PPR family. P subfamily.

Its subcellular location is the mitochondrion. The sequence is that of Pentatricopeptide repeat-containing protein At1g71060, mitochondrial from Arabidopsis thaliana (Mouse-ear cress).